The following is a 528-amino-acid chain: Protein WHAT'S THIS FACTOR 1 homolog, chloroplastic (528 aa).

The transit peptide at 1–73 (MEPKLLLSAH…KTRVVVEPVR (73 aa)) directs the protein to the chloroplast. In terms of domain architecture, PORR spans 80–408 (KELTFDSVVQ…VKEKMRALVS (329 aa)). Positions 410-528 (PRFPRRGGPR…FPDGTPREKW (119 aa)) are disordered. The segment covering 418–428 (PRKDEEGREVE) has biased composition (basic and acidic residues). Acidic residues predominate over residues 429-491 (IDGSDADGEE…DDDDEDEEED (63 aa)).

It is found in the plastid. The protein localises to the chloroplast. In terms of biological role, RNA-binding protein involved in group II intron splicing. Binds specific group II introns and promotes their splicing. Functions in the context of a heterodimer with the ribonuclease III domain-containing protein RNC1. The polypeptide is Protein WHAT'S THIS FACTOR 1 homolog, chloroplastic (Arabidopsis thaliana (Mouse-ear cress)).